The following is a 193-amino-acid chain: Molybdenum cofactor guanylyltransferase (193 aa).

GTP is bound by residues Leu8–Gly10, Lys21, Asp67, and Asp98. Asp98 is a Mg(2+) binding site.

Belongs to the MobA family. As to quaternary structure, monomer. Mg(2+) serves as cofactor.

Its subcellular location is the cytoplasm. The catalysed reaction is Mo-molybdopterin + GTP + H(+) = Mo-molybdopterin guanine dinucleotide + diphosphate. In terms of biological role, transfers a GMP moiety from GTP to Mo-molybdopterin (Mo-MPT) cofactor (Moco or molybdenum cofactor) to form Mo-molybdopterin guanine dinucleotide (Mo-MGD) cofactor. This Cereibacter sphaeroides (strain ATCC 17023 / DSM 158 / JCM 6121 / CCUG 31486 / LMG 2827 / NBRC 12203 / NCIMB 8253 / ATH 2.4.1.) (Rhodobacter sphaeroides) protein is Molybdenum cofactor guanylyltransferase.